Consider the following 240-residue polypeptide: Cysteine-rich venom protein (240 aa).

An N-terminal signal peptide occupies residues methionine 1 to glycine 19. In terms of domain architecture, SCP spans aspartate 39–tyrosine 166. Disulfide bonds link cysteine 75-cysteine 153, cysteine 92-cysteine 167, cysteine 148-cysteine 164, cysteine 186-cysteine 193, cysteine 189-cysteine 198, cysteine 202-cysteine 235, cysteine 211-cysteine 229, and cysteine 220-cysteine 233. One can recognise a ShKT domain in the interval cysteine 202–cysteine 235.

The protein belongs to the CRISP family. Expressed by the venom gland.

Its subcellular location is the secreted. In terms of biological role, may block ryanodine receptors (RYR). This is Cysteine-rich venom protein from Protobothrops mucrosquamatus (Taiwan habu).